The sequence spans 426 residues: Dihydroorotase (426 aa).

Positions 62 and 64 each coordinate Zn(2+). Substrate contacts are provided by residues His-64–Arg-66 and Asn-96. Asp-154, His-181, and His-234 together coordinate Zn(2+). Asn-280 provides a ligand contact to substrate. Residue Asp-307 coordinates Zn(2+). Asp-307 is an active-site residue. Substrate-binding positions include His-311 and Phe-325–Gly-326.

This sequence belongs to the metallo-dependent hydrolases superfamily. DHOase family. Class I DHOase subfamily. It depends on Zn(2+) as a cofactor.

It carries out the reaction (S)-dihydroorotate + H2O = N-carbamoyl-L-aspartate + H(+). Its pathway is pyrimidine metabolism; UMP biosynthesis via de novo pathway; (S)-dihydroorotate from bicarbonate: step 3/3. In terms of biological role, catalyzes the reversible cyclization of carbamoyl aspartate to dihydroorotate. The protein is Dihydroorotase of Desulforapulum autotrophicum (strain ATCC 43914 / DSM 3382 / VKM B-1955 / HRM2) (Desulfobacterium autotrophicum).